Here is a 993-residue protein sequence, read N- to C-terminus: MAASAFNIHKLVASHGDKGLLASALVDKLAHEQLEEQVQHQRRGLKVYIRNALDVKDSEIIRDRYGGKYDLHLTQQEQAPHGLAGALRLCELLDCLDSFPRTGLRQDLVLDFGGSWVTHYLRGHNVHCCSPCLGIRDKMRHTERLMTMRKVIVNDPDTFESRVPDFCTLPAEDCKVQAHFVISIHGGYDMGFKGLCRAMHAHGTTFLKGTMMFDGAMLFDTEGYLADLKCKWKKIKPRTYESEDQTPLLSRISDNLTTTIKDHTLIAFDFVDESTLSYVHKWENVKSFLTDQTYSYKGMTYGLERCLIQHGIMTYKIIAVPGTCPPELIRHCIWFTSLKDYVGLKIPVSQDLVEWKTVRILISTLRETEEIAMRCYSDKKNWLEQFKVILGVLSSKSSTIVINGMAMQAGERIDTSDYHYIGLAILLHTRMKYEQLGRMYDMWNSTFIRKFFASLTRPMRVFLSACVKTLFPTLRPRDEKEFLVKLSTFVTFNEVCQVDLDAEWDVISSAAFTAEMAVEDGKRLAEDRKQKAEAASQIPVDEIPDDTAESSDDTPREADTNQKSEPSSPELETLSTQTRSPITRLAQRASSMLEYSAYEAQLHDNAVSNLDRMWCMAGGDKKNNRLESNVKFVFETYHIVDPLVNVHFPTGRWLYRVPEGISYSVGFNEHGIGPKADGELYIVNADCVISNSKCLADTTLQYLAPTGTISLVDGVAGCGKTTAIKKMFNPATDVIVTANKKSALDVRQALFNCTDSKEATTFVRTADSILMNDTNEVQRVLVDEVVLLHFGQLCAVMSKLKAVRAICFGDSEQIAFCSRDASFDMRHSTIIPDETDTADTTFRSPQDVIKVVKCMASKALKKGTHSKYASWVSQSKVQRSVSSKAVASVTMVDLTEDRFYITMTQADKTALRTRARELNMSNDFIEHRIKTTHESQGVSEDHVTLVRLKTTKCDLFKAFKYCLVAVTRHKKTFRYEHVGKLDGDLIAECLARV.

A methyltransferase region spans residues 50-408 (RNALDVKDSE…TIVINGMAMQ (359 aa)). In terms of domain architecture, Alphavirus-like MT spans 72–289 (HLTQQEQAPH…HKWENVKSFL (218 aa)). The segment at 525–581 (AEDRKQKAEAASQIPVDEIPDDTAESSDDTPREADTNQKSEPSSPELETLSTQTRSP) is disordered. Positions 542–552 (EIPDDTAESSD) are enriched in acidic residues. Positions 553-562 (DTPREADTNQ) are enriched in basic and acidic residues. The span at 564-576 (SEPSSPELETLST) shows a compositional bias: low complexity. Residues 682–838 (IVNADCVISN…TIIPDETDTA (157 aa)) form the (+)RNA virus helicase ATP-binding domain. The interval 711-975 (LVDGVAGCGK…VTRHKKTFRY (265 aa)) is ATP-dependent helicase. Residue 714–721 (GVAGCGKT) coordinates ATP. Residues 839 to 993 (DTTFRSPQDV…DLIAECLARV (155 aa)) enclose the (+)RNA virus helicase C-terminal domain.

This sequence belongs to the bromoviridae replication protein 1a family. In terms of assembly, interacts with RNA-directed RNA polymerase 2a.

It is found in the host endoplasmic reticulum membrane. In terms of biological role, involved in the virus replication. Contains a helicase domain and a methyltransferase domain. The methyltransferase domain is probably involved in viral RNA capping. Involved in the formation of ER membrane spherular invaginations in which RNA replication complexes form. The polypeptide is Replication protein 1a (Canna (Florist's daisy)).